We begin with the raw amino-acid sequence, 309 residues long: Taste receptor type 2 member 20 (309 aa).

Topologically, residues 1 to 6 are extracellular; the sequence is MMSFLH. A helical membrane pass occupies residues 7-27; the sequence is IVFSILVVVAFILGNFANGFI. The Cytoplasmic portion of the chain corresponds to 28 to 46; it reads ALINFIAWVKRQKISSADQ. The chain crosses the membrane as a helical span at residues 47-67; sequence IIAALAVSRVGLLWVILLHWY. The Extracellular segment spans residues 68–79; the sequence is STVLNPTSSNLK. A helical transmembrane segment spans residues 80–100; it reads VIIFISNAWAVTNHFSIWLAT. Residues 101–125 are Cytoplasmic-facing; sequence SLSIFYLLKIVNFSRLIFHHLKRKA. A helical membrane pass occupies residues 126–146; that stretch reads KSVVLVIVLGSLFFLVCHLVM. Over 147–178 the chain is Extracellular; sequence KHTYINVWTEECEGNVTWKIKLRNAMHLSNLT. N-linked (GlcNAc...) asparagine glycans are attached at residues Asn-161 and Asn-176. Residues 179 to 199 form a helical membrane-spanning segment; that stretch reads VAMLANLIPFTLTLISFLLLI. The Cytoplasmic segment spans residues 200–229; that stretch reads YSLCKHLKKMQLHGKGSQDPSTKIHIKALQ. The helical transmembrane segment at 230-250 threads the bilayer; it reads TVTSFLILLAIYFLCLIISFW. Topologically, residues 251–259 are extracellular; that stretch reads NFKMRPKEI. The chain crosses the membrane as a helical span at residues 260-280; that stretch reads VLMLCQAFGIIYPSFHSFILI. Over 281 to 309 the chain is Cytoplasmic; sequence WGNKTLKQTFLSVLWQVTCWAKGQNQSTP.

Belongs to the G-protein coupled receptor T2R family. In terms of tissue distribution, expressed in subsets of taste receptor cells of the tongue and exclusively in gustducin-positive cells.

Its subcellular location is the membrane. Functionally, receptor that may play a role in the perception of bitterness and is gustducin-linked. May play a role in sensing the chemical composition of the gastrointestinal content. The activity of this receptor may stimulate alpha gustducin, mediate PLC-beta-2 activation and lead to the gating of TRPM5. The protein is Taste receptor type 2 member 20 (TAS2R20) of Homo sapiens (Human).